The sequence spans 530 residues: Hyccin 2 (530 aa).

Phosphothreonine is present on residues threonine 30 and threonine 306. 2 positions are modified to phosphoserine: serine 321 and serine 341. Residues 328–410 (RREGAEGVNG…DSVVRKQYVQ (83 aa)) form a disordered region. Over residues 353 to 373 (SGASLSSQPIGTKPSSSSQRG) the composition is skewed to polar residues. 4 positions are modified to phosphoserine: serine 430, serine 442, serine 444, and serine 491. Positions 498 to 530 (GQAGEGKELLSPGAPLTKQSRSPSFNMQLISQV) are disordered. Residues 514 to 530 (TKQSRSPSFNMQLISQV) are compositionally biased toward polar residues.

It belongs to the Hyccin family. As to quaternary structure, component of a phosphatidylinositol 4-kinase (PI4K) complex, composed of PI4KA, EFR3 (EFR3A or EFR3B), TTC7 (TTC7A or TTC7B) and HYCC (HYCC1 or HYCC2).

It localises to the cytoplasm. It is found in the cytosol. Its subcellular location is the cell membrane. Functionally, component of a complex required to localize phosphatidylinositol 4-kinase (PI4K) to the plasma membrane. This Pongo abelii (Sumatran orangutan) protein is Hyccin 2 (HYCC2).